A 276-amino-acid chain; its full sequence is NADPH-dependent 7-cyano-7-deazaguanine reductase (276 aa).

83–85 (IES) is a substrate binding site. Residue 85–86 (SK) participates in NADPH binding. Residue Cys184 is the Thioimide intermediate of the active site. Asp191 serves as the catalytic Proton donor. 223-224 (HE) contacts substrate. 252–253 (RG) provides a ligand contact to NADPH.

This sequence belongs to the GTP cyclohydrolase I family. QueF type 2 subfamily. Homodimer.

The protein resides in the cytoplasm. The enzyme catalyses 7-aminomethyl-7-carbaguanine + 2 NADP(+) = 7-cyano-7-deazaguanine + 2 NADPH + 3 H(+). The protein operates within tRNA modification; tRNA-queuosine biosynthesis. Catalyzes the NADPH-dependent reduction of 7-cyano-7-deazaguanine (preQ0) to 7-aminomethyl-7-deazaguanine (preQ1). The chain is NADPH-dependent 7-cyano-7-deazaguanine reductase from Pseudomonas paraeruginosa (strain DSM 24068 / PA7) (Pseudomonas aeruginosa (strain PA7)).